Reading from the N-terminus, the 196-residue chain is CMRF35-like molecule 2 (196 aa).

The N-terminal stretch at 1–17 (MRLCAGLLLLCFQGCLS) is a signal peptide. The 105-residue stretch at 18–122 (LTGPGSVSGY…DSWSRDPSVS (105 aa)) folds into the Ig-like V-type domain. Over 18-171 (LTGPGSVSGY…QLWSLLSSIQ (154 aa)) the chain is Extracellular. The cysteines at positions 36 and 104 are disulfide-linked. N-linked (GlcNAc...) asparagine glycosylation is present at Asn84. A helical membrane pass occupies residues 172–192 (FQVLVFLKLPLFLSMLCAIFW). Residues 193 to 196 (VNRL) are Cytoplasmic-facing.

Belongs to the CD300 family. As to quaternary structure, interacts with TYROBP.

The protein resides in the cell membrane. Its function is as follows. Probably acts as an activating receptor. This is CMRF35-like molecule 2 (Cd300e) from Mus musculus (Mouse).